The following is a 176-amino-acid chain: MKAGSFYKLGLLVASAVLVAACSKTPGSADGGAAVGDGDATAQGLGQMTHFAGQEPGESYTTQAPHNQLYLFAYDDSTLASKYLPSVNAQAEYLKTHPGARVMIAGHTDERGSREYNVALGERRADTVAEILRMAGVSRQQIRVVSYGKERPANYGHDEASHAQNRRVEFIYEATR.

Positions Met1–Ala21 are cleaved as a signal peptide. Cys22 carries the N-palmitoyl cysteine lipid modification. Cys22 is lipidated: S-diacylglycerol cysteine. Positions Tyr60–Arg176 constitute an OmpA-like domain.

Belongs to the Pal lipoprotein family. As to quaternary structure, the Tol-Pal system is composed of five core proteins: the inner membrane proteins TolA, TolQ and TolR, the periplasmic protein TolB and the outer membrane protein Pal. They form a network linking the inner and outer membranes and the peptidoglycan layer.

Its subcellular location is the cell outer membrane. Its function is as follows. Part of the Tol-Pal system, which plays a role in outer membrane invagination during cell division and is important for maintaining outer membrane integrity. Very strongly associated with the peptidoglycan. The sequence is that of Peptidoglycan-associated lipoprotein from Legionella pneumophila.